Reading from the N-terminus, the 1812-residue chain is MDLSAVQIQEVQNVLHAMQKILECPICLELIKEPVSTKCDHIFCKFCMLKLLNQKKGPSQCPLCKNEITKRSLQGSTRFSQLAEELLRIMAAFELDTGMQLTNGFSFSKKRNNSCERLNEEASIIQSVGYRNRVRRLPQVEPGNATLKDSLGVQLSNLGIVRSVKKNRQTQPRKKSVYIELDSDSSEETVTKPGDCSVRDQELLQTAPQEAGDEGKLHSAEEAACEFSEGIRNIEHHQCSDDLNPTENHATERHPEKCQSISISNVCVEPCGTDAHASSLQPETSSLLLIEDRMNAEKAEFCNKSKQPGIAVSQQSRWAASKGTCNDRQVPSTGEKVGPNADSLSDREKWTHPQSLCPENSGATTDVPWITLNSSVQKVNEWFSRTGEMLTSDSASARRHESNAEAAVVLEVSNEVDGGFSSSRKTDLVTPDPHHTLMCKSGRDFSKPVEDNISDKIFGKSYQRKGSRPHLNHVTEIIGTFITEPQITQEQPFTNKLKRKRSTSLQPEDFIKKADSAGVQRTPDNINQGTDLMEPNEQAVSTTSNCQENKIAGSNLQKEKSAHPTESLRKEPASTAGAKSISNSVSDLEVELNVHSSKAPKKNRLRRKSSIRCALPLEPISRNPSPPTCAELQIDSCGSSEETKKNHSNQQPAGHLREPQLIEDTEPAADAKKNEPNEHIRKRRASDAFPEEKLMNKAGLLTSCSSPRKSQGPVNPSPQRTGTEQLETRQMSDSAKELGDRVLGGEPSGKTTDRSEESTSVSLVSDTDYDTQNSVSVLDAHTVRYARTGSAQCMTQFVASENPKELVHGSNNAGSGTEGLKPPLRHALNLSQEKVEMEDSELDTQYLQNTFQVSKRQSFALFSKPRSPQKDCAHSVPSKELSPKVTAKGKQKERQGQEEFEISHVQAVAATVGLPVPCQEGKLAADTMCDRGCRLCPSSHYRSGENGLSATGKSGISQNSHFKQSVSPIRSSIKTDNRKPLTEGRFERHTSSTEMAVGNENILQSTVHTVSLNNRGNACQEAGSGSIHEVCSTGDSFPGQLGRNRGPKVNTVPPLDSMQPGVCQQSVPVSDKYLEIKKQEGEAVCADFSPCLFSDHLEQSMSGKVFQVCSETPDDLLDDVEIQGHTSFGEGDIMERSAVFNGSILRRESSRSPSPVTHASKSQSLHRASRKLESSEESDSTEDEDLPCFQHLLSRISNTPELTRCSSAVTQRMPEKAEGTQAPWKGSSSDCNNEVIMIEASQEHQFSEDPRCSGSMFSSQHSAAQGSTANANSQDSNFIPPSKQRSHQCGNEEAFLSDKELISDNEEMATCLEEDNDQEEDSIIPDSEASGYESETNLSEDCSQSDILTTQQRATMKYNLIKLQQEMAHLEAVLEQRGNQPSGHSPSLLADPCALEDLPDLEPNMSGAAILTSKNINENPVSQNLKSACDDKFQLQHLEGPTSGDDESGMGRPSPFKSPLAGSRGSAHGCSRHLQKRNSPSQEELLQPAGSEASSEPHNSTGQSCLPRRELEGTPYLGSGISLFSSRDPESESPKEPAHIGTTPASTSALKIPQGQVAFRSAAAAGADKAVVGIVSKIKPELTSSEERADRDISMVVSGLTPKEVMTVQKFAEKYRLTLTDAITEETTHVIIKTDAEFVCERTLKYFLGIAGGKWIVSYSWVVRSIQERRLLNVHEFEVKGDVVTGRNHQGPRRSRESREKLFKGLQVYCCEPFTNMPKDELERMLQLCGASVVKELPSLTHDTGAHLVVIVQPSAWTEDSNCPDIGQLCKARLVMWDWVLDSLSSYRCRDLDAYLVQNITCDSSEPQDSND.

M1 is subject to N-acetylmethionine. The RING-type zinc-finger motif lies at 24-65 (CPICLELIKEPVSTKCDHIFCKFCMLKLLNQKKGPSQCPLCK). A Glycyl lysine isopeptide (Lys-Gly) (interchain with G-Cter in SUMO2) cross-link involves residue K109. S114 is subject to Phosphoserine. Basic residues predominate over residues 165–176 (KKNRQTQPRKKS). The tract at residues 165-198 (KKNRQTQPRKKSVYIELDSDSSEETVTKPGDCSV) is disordered. Residue K298 forms a Glycyl lysine isopeptide (Lys-Gly) (interchain with G-Cter in SUMO2) linkage. Positions 321 to 332 (SKGTCNDRQVPS) are enriched in polar residues. Residues 321-362 (SKGTCNDRQVPSTGEKVGPNADSLSDREKWTHPQSLCPENSG) are disordered. A Glycyl lysine isopeptide (Lys-Gly) (interchain with G-Cter in SUMO2) cross-link involves residue K336. The segment covering 352-362 (HPQSLCPENSG) has biased composition (polar residues). A Phosphoserine modification is found at S392. Residues K440, K456, and K512 each participate in a glycyl lysine isopeptide (Lys-Gly) (interchain with G-Cter in SUMO2) cross-link. Disordered stretches follow at residues 492 to 581 (PFTN…AKSI) and 640 to 767 (SEET…VSDT). Polar residues predominate over residues 538–556 (QAVSTTSNCQENKIAGSNL). Composition is skewed to basic and acidic residues over residues 557 to 572 (QKEK…RKEP) and 669 to 679 (ADAKKNEPNEH). Residues S686, S706, and S717 each carry the phosphoserine modification. 2 stretches are compositionally biased toward polar residues: residues 702–733 (TSCS…QMSD) and 758–767 (STSVSLVSDT). S831 is subject to Phosphoserine. Disordered stretches follow at residues 864 to 899 (KPRS…GQEE), 947 to 995 (GLSA…STEM), 1030 to 1056 (VCST…PPLD), 1147 to 1185 (RESS…EDED), and 1205 to 1230 (CSSA…SSSD). Polar residues predominate over residues 947 to 972 (GLSATGKSGISQNSHFKQSVSPIRSS). Position 971 is a phosphoserine; by CHEK2 (S971). Residues 973-991 (IKTDNRKPLTEGRFERHTS) are compositionally biased toward basic and acidic residues. S992 carries the phosphoserine modification. Residue K1048 forms a Glycyl lysine isopeptide (Lys-Gly) (interchain with G-Cter in SUMO2) linkage. A compositionally biased stretch (polar residues) spans 1151–1166 (RSPSPVTHASKSQSLH). Phosphoserine occurs at positions 1152, 1154, 1174, and 1180. Over residues 1175-1185 (SEESDSTEDED) the composition is skewed to acidic residues. Residue S1241 is modified to Phosphoserine. The interval 1244–1289 (HQFSEDPRCSGSMFSSQHSAAQGSTANANSQDSNFIPPSKQRSHQC) is disordered. Residues 1255–1279 (SMFSSQHSAAQGSTANANSQDSNFI) show a composition bias toward polar residues. Residues S1297 and S1303 each carry the phosphoserine modification. Over residues 1313 to 1323 (EEDNDQEEDSI) the composition is skewed to acidic residues. The segment at 1313–1343 (EEDNDQEEDSIIPDSEASGYESETNLSEDCS) is disordered. The segment covering 1333–1343 (ESETNLSEDCS) has biased composition (polar residues). Phosphoserine is present on S1343. A Phosphothreonine modification is found at T1350. The tract at residues 1353-1380 (RATMKYNLIKLQQEMAHLEAVLEQRGNQ) is interaction with PALB2. Phosphoserine is present on residues S1413, S1481, and S1495. The interval 1437–1547 (HLEGPTSGDD…AHIGTTPAST (111 aa)) is disordered. The segment covering 1492–1504 (EASSEPHNSTGQS) has biased composition (polar residues). Basic and acidic residues predominate over residues 1527 to 1538 (RDPESESPKEPA). BRCT domains are found at residues 1585-1679 (SEER…EFEV) and 1698-1797 (SREK…AYLV).

As to quaternary structure, heterodimer with BARD1. Part of the BRCA1-associated genome surveillance complex (BASC), which contains BRCA1, MSH2, MSH6, MLH1, ATM, BLM, PMS2 and the MRE11-RAD50-NBN protein (MRN) complex. This association could be a dynamic process changing throughout the cell cycle and within subnuclear domains. Component of the BRCA1-A complex, at least composed of BRCA1, BARD1, UIMC1/RAP80, ABRAXAS1, BRCC3/BRCC36, BABAM2 and BABAM1/NBA1. Interacts (via the BRCT domains) with ABRAXAS1 (phosphorylated form); this is important for recruitment to sites of DNA damage. Can form a heterotetramer with two molecules of ABRAXAS1 (phosphorylated form). Component of the BRCA1-RBBP8 complex. Interacts (via the BRCT domains) with RBBP8 ('Ser-327' phosphorylated form); the interaction ubiquitinates RBBP8, regulates CHEK1 activation, and involves RBBP8 in BRCA1-dependent G2/M checkpoint control on DNA damage. Associates with RNA polymerase II holoenzyme. Interacts with SMC1A, NELFB, DCLRE1C, CLSPN. CHEK1, CHEK2, BAP1, BRCC3, UBXN1 and PCLAF. Interacts (via BRCT domains) with BRIP1 (phosphorylated form). Interacts with FANCD2 (ubiquitinated form). Interacts with H2AX (phosphorylated on 'Ser-140'). Interacts (via the BRCT domains) with ACACA (phosphorylated form); the interaction prevents dephosphorylation of ACACA. Part of a BRCA complex containing BRCA1, BRCA2 and PALB2. Interacts directly with PALB2; the interaction is essential for its function in HRR. Interacts directly with BRCA2; the interaction occurs only in the presence of PALB2 which serves as the bridging protein. Interacts (via the BRCT domains) with LMO4; the interaction represses the transcriptional activity of BRCA1. Interacts (via the BRCT domains) with CCAR2 (via N-terminus); the interaction represses the transcriptional activator activity of BRCA1. Interacts with EXD2. Interacts (via C-terminus) with DHX9; this interaction is direct and links BRCA1 to the RNA polymerase II holoenzyme. Interacts with DNA helicase ZGRF1; the interaction is increased following DNA damage induction. Post-translationally, phosphorylated in response to IR, UV, and various stimuli that cause checkpoint activation, probably by ATM or ATR. Phosphorylation at Ser-971 by CHEK2 regulates mitotic spindle assembly. Phosphorylation by AURKA regulates centrosomal microtubule nucleation. In terms of processing, autoubiquitinated, undergoes 'Lys-6'-linked polyubiquitination. 'Lys-6'-linked polyubiquitination does not promote degradation. In terms of tissue distribution, in the embryo, expressed in otic vesicles at day 9.5. At day 10.5, this expression decreases and high levels are found in the neuroectoderm. At days 11-12.5, high levels in differentiating keratinocytes and whisker pad primordia. At days 14-17, expression also observed in kidney epithelial cells. In the adult, highest levels found in spleen, thymus, lymph nodes, epithelial organs, and alveolar and ductal epithelial cells of the mammary gland. Very low levels in brain, kidney, and skin. No expression in heart, liver or lung.

It localises to the nucleus. Its subcellular location is the chromosome. The protein localises to the cytoplasm. The catalysed reaction is S-ubiquitinyl-[E2 ubiquitin-conjugating enzyme]-L-cysteine + [acceptor protein]-L-lysine = [E2 ubiquitin-conjugating enzyme]-L-cysteine + N(6)-ubiquitinyl-[acceptor protein]-L-lysine.. It participates in protein modification; protein ubiquitination. Its function is as follows. E3 ubiquitin-protein ligase that specifically mediates the formation of 'Lys-6'-linked polyubiquitin chains and plays a central role in DNA repair by facilitating cellular responses to DNA damage. It is unclear whether it also mediates the formation of other types of polyubiquitin chains. The BRCA1-BARD1 heterodimer coordinates a diverse range of cellular pathways such as DNA damage repair, ubiquitination and transcriptional regulation to maintain genomic stability. Regulates centrosomal microtubule nucleation. Required for appropriate cell cycle arrests after ionizing irradiation in both the S-phase and the G2 phase of the cell cycle. Required for FANCD2 targeting to sites of DNA damage. Inhibits lipid synthesis by binding to inactive phosphorylated ACACA and preventing its dephosphorylation. Contributes to homologous recombination repair (HRR) via its direct interaction with PALB2, fine-tunes recombinational repair partly through its modulatory role in the PALB2-dependent loading of BRCA2-RAD51 repair machinery at DNA breaks. Component of the BRCA1-RBBP8 complex which regulates CHEK1 activation and controls cell cycle G2/M checkpoints on DNA damage via BRCA1-mediated ubiquitination of RBBP8. Acts as a transcriptional activator. The chain is Breast cancer type 1 susceptibility protein homolog (Brca1) from Mus musculus (Mouse).